Consider the following 72-residue polypeptide: MASNKISFSFVLCLYMCSLLDAKSMNPTGRRCPDPNGVEKKSMCYSSCKTQGFMGGSCQGHKGNYMCECYEG.

The N-terminal stretch at 1–22 (MASNKISFSFVLCLYMCSLLDA) is a signal peptide. 3 disulfide bridges follow: C32–C58, C44–C67, and C48–C69.

Belongs to the DEFL family.

Its subcellular location is the secreted. In Arabidopsis thaliana (Mouse-ear cress), this protein is Defensin-like protein 35.